A 316-amino-acid polypeptide reads, in one-letter code: PDZ and LIM domain protein 3 (316 aa).

The 84-residue stretch at 1-84 (MPQNVVLPGP…QLCLKIDRAE (84 aa)) folds into the PDZ domain. A phosphoserine mark is found at Ser18 and Ser93. Residue Arg164 is modified to Omega-N-methylarginine. The LIM zinc-binding domain occupies 244–303 (PLCDKCGSGIVGAVVKARDKYRHPECFVCADCNLNLKQKGYFFVEGELYCETHARARTRP).

In terms of assembly, interacts with ACTN2. Forms a heterodimer with PDLIM4 (via LIM domain).

It localises to the cytoplasm. Its subcellular location is the myofibril. The protein localises to the sarcomere. The protein resides in the z line. In terms of biological role, may play a role in the organization of actin filament arrays within muscle cells. The chain is PDZ and LIM domain protein 3 (Pdlim3) from Mus musculus (Mouse).